The chain runs to 851 residues: DEAD-box ATP-dependent RNA helicase 29 (851 aa).

Positions 1 to 49 are disordered; sequence MARLNPSKPSSRGGKPRSSSADAMAEHKPPPGRPKREGEGASKKKAKSG. Low complexity predominate over residues 7 to 20; sequence SKPSSRGGKPRSSS. Over residues 24–42 the composition is skewed to basic and acidic residues; that stretch reads MAEHKPPPGRPKREGEGAS. The Q motif motif lies at 49–77; that stretch reads GGFESMGLCEEVYRGVRHKGYRVPTPIQR. The 174-residue stretch at 80–253 folds into the Helicase ATP-binding domain; the sequence is MPLILAGHDI…KAGLRDPQIV (174 aa). Residue 93-100 coordinates ATP; the sequence is ARTGSGKT. The DEAD box signature appears at 201–204; that stretch reads DEAD. Positions 277 to 426 constitute a Helicase C-terminal domain; sequence KLAALLYLVR…PAPTEEELLK (150 aa). The interval 702 to 851 is disordered; the sequence is KWQQKTHRSI…KGKMKGKGTR (150 aa). A compositionally biased stretch (basic residues) spans 733–746; the sequence is RGNRKHTAAGRGRR. Basic and acidic residues-rich tracts occupy residues 773 to 787 and 796 to 825; these read DIAR…ESKF and RHDG…DGNG. The span at 841-851 shows a compositional bias: basic residues; sequence GKGKMKGKGTR.

The protein belongs to the DEAD box helicase family. DDX54/DBP10 subfamily.

The catalysed reaction is ATP + H2O = ADP + phosphate + H(+). This Oryza sativa subsp. indica (Rice) protein is DEAD-box ATP-dependent RNA helicase 29.